The sequence spans 165 residues: Putative pre-16S rRNA nuclease (165 aa).

Belongs to the YqgF nuclease family.

The protein resides in the cytoplasm. Functionally, could be a nuclease involved in processing of the 5'-end of pre-16S rRNA. The chain is Putative pre-16S rRNA nuclease from Rhizobium meliloti (strain 1021) (Ensifer meliloti).